A 348-amino-acid chain; its full sequence is 2-methyl-6-phytyl-1,4-hydroquinone methyltransferase 2, chloroplastic (348 aa).

The disordered stretch occupies residues methionine 1–glycine 48. Residues methionine 1–arginine 59 constitute a chloroplast transit peptide. Over cysteine 60–arginine 317 the chain is Chloroplast intermembrane. Residues valine 125–phenylalanine 134 form an SAM motif I region. An SAM motif II region spans residues valine 170–proline 183. An SAM motif III region spans residues arginine 211–proline 224. A helical transmembrane segment spans residues phenylalanine 318–lysine 338. Topologically, residues aspartate 339 to isoleucine 348 are stromal.

This sequence belongs to the class I-like SAM-binding methyltransferase superfamily. MPBQ/MBSQ MT family.

The protein localises to the plastid. The protein resides in the chloroplast inner membrane. It carries out the reaction 2-methyl-6-phytyl-1,4-benzene-1,4-diol + S-adenosyl-L-methionine = 2,3-dimethyl-6-phytylbenzene-1,4-diol + S-adenosyl-L-homocysteine + H(+). It catalyses the reaction 2-methyl-6-(all-trans-nonaprenyl)benzene-1,4-diol + S-adenosyl-L-methionine = plastoquinol-9 + S-adenosyl-L-homocysteine + H(+). The enzyme catalyses 6-geranylgeranyl-2-methylbenzene-1,4-diol + S-adenosyl-L-methionine = 6-geranylgeranyl-2,3-dimethylbenzene-1,4-diol + S-adenosyl-L-homocysteine + H(+). It participates in cofactor biosynthesis; tocopherol biosynthesis. Functionally, involved in a key methylation step in both tocopherols (vitamin E) and plastoquinone synthesis. Catalyzes the conversion of 2-methyl-6-phytyl-1,4-hydroquinone (MPBQ) to 2,3-dimethyl-6-phytyl-1,4-hydroquinone (DMPQ, a substrate for tocopherol cyclase), and 2-methyl-6-solanyl-1,4-benzoquinone (MSBQ) to plastoquinone. This is 2-methyl-6-phytyl-1,4-hydroquinone methyltransferase 2, chloroplastic from Oryza sativa subsp. japonica (Rice).